A 426-amino-acid polypeptide reads, in one-letter code: Gamma-glutamyl phosphate reductase (426 aa).

The protein belongs to the gamma-glutamyl phosphate reductase family.

Its subcellular location is the cytoplasm. The enzyme catalyses L-glutamate 5-semialdehyde + phosphate + NADP(+) = L-glutamyl 5-phosphate + NADPH + H(+). The protein operates within amino-acid biosynthesis; L-proline biosynthesis; L-glutamate 5-semialdehyde from L-glutamate: step 2/2. Its function is as follows. Catalyzes the NADPH-dependent reduction of L-glutamate 5-phosphate into L-glutamate 5-semialdehyde and phosphate. The product spontaneously undergoes cyclization to form 1-pyrroline-5-carboxylate. This chain is Gamma-glutamyl phosphate reductase, found in Acidovorax ebreus (strain TPSY) (Diaphorobacter sp. (strain TPSY)).